Here is a 122-residue protein sequence, read N- to C-terminus: Acidic phospholipase A2 CTs-A3 (122 aa).

Disulfide bonds link C26/C116, C28/C44, C43/C95, C49/C122, C50/C88, C57/C81, and C75/C86. Residues Y27, G29, and G31 each contribute to the Ca(2+) site. Residue H47 is part of the active site. D48 serves as a coordination point for Ca(2+). The active site involves D89.

Ca(2+) serves as cofactor. Expressed by the venom gland.

It is found in the secreted. The catalysed reaction is a 1,2-diacyl-sn-glycero-3-phosphocholine + H2O = a 1-acyl-sn-glycero-3-phosphocholine + a fatty acid + H(+). Its function is as follows. Snake venom phospholipase A2 (PLA2) that shows a moderate inhibition of ADP-induced human platelet aggregation when tested on platelet rich plasma. Exhibits moderate hydrolytic activities and prefers the anionic micelles (dPPC with deoxycholate) to the zwitterionic micelles (dPPC with Triton X-100). PLA2 catalyzes the calcium-dependent hydrolysis of the 2-acyl groups in 3-sn-phosphoglycerides. The chain is Acidic phospholipase A2 CTs-A3 from Trimeresurus stejnegeri (Chinese green tree viper).